The primary structure comprises 343 residues: uncharacterized protein (343 aa).

Disordered regions lie at residues Met-1–Thr-25, Lys-62–Asp-119, and Asn-169–Ser-188. A compositionally biased stretch (basic residues) spans Lys-62 to Gln-71. Over residues Asn-72–Glu-81 the composition is skewed to basic and acidic residues. Residues Asn-83–Asn-107 are compositionally biased toward acidic residues.

This is an uncharacterized protein from Acanthamoeba polyphaga (Amoeba).